The following is an 816-amino-acid chain: MGDTIVEPAPLKPTSEPAPGPPGNNGGSLLSVITEGVGELSVIDPEVAQKACQEVLEKVKLLHGGVAISSRGTPLELVNGDGVDSEIRCLDDPPAQIREEEDEMGATVASGTAKGARRRRQNNSAKQSWLLRLFESKLFDISMAISYLYNSKEPGVQAYIGNRLFCFRNEDVDFYLPQLLNMYIHMDEDVGDAIKPYIVHRCRQSINFSLQCALLLGAYSSDMHISTQRHSRGTKLRKLILSDELKPAHRKRELPSLSPAPDTGLSPSKRTHQRSKSDATASISLSSNLKRTASNPKVENEDEELSSSTESIDNSFSSPVRLAPEREFIKSLMAIGKRLATLPTKEQKTQRLISELSLLNHKLPARVWLPTAGFDHHVVRVPHTQAVVLNSKDKAPYLIYVEVLECENFDTTSVPARIPENRIRSTRSVENLPECGITHEQRAGSFSTVPNYDNDDEAWSVDDIGELQVELPEVHTNSCDNISQFSVDSITSQESKEPVFIAAGDIRRRLSEQLAHTPTAFKRDPEDPSAVALKEPWQEKVRRIREGSPYGHLPNWRLLSVIVKCGDDLRQELLAFQVLKQLQSIWEQERVPLWIKPYKILVISADSGMIEPVVNAVSIHQVKKQSQLSLLDYFLQEHGSYTTEAFLSAQRNFVQSCAGYCLGCYLLQVKDRHNGNILLDAEGHIIHIDFGFILSSSPRNLGFETSAFKLTTEFVDVMGGLDGDMFNYYKMLMLQGLIAARKHMDKVVQIVEIMQQGSQLPCFHGSSTIRNLKERFHMSMTEEQLQLLVEQMVDGSMRSITTKLYDGFQYLTNGIM.

Disordered stretches follow at residues 1–30, 101–120, and 248–318; these read MGDT…GSLL, EDEM…RRRR, and AHRK…SFSS. Gly-2 carries the post-translational modification N-acetylglycine. Residues 2 to 68 are interaction with ACBD3; it reads GDTIVEPAPL…VKLLHGGVAI (67 aa). The 214-residue stretch at 29–242 folds into the PIK helical domain; the sequence is LLSVITEGVG…GTKLRKLILS (214 aa). Phosphoserine is present on Ser-258. The residue at position 263 (Thr-263) is a Phosphothreonine. A phosphoserine mark is found at Ser-266, Ser-275, Ser-277, Ser-284, and Ser-294. Polar residues-rich tracts occupy residues 278-297 and 306-318; these read DATA…SNPK and SSST…SFSS. Ser-428 carries the phosphoserine modification. A Phosphothreonine modification is found at Thr-438. Ser-511 bears the Phosphoserine mark. A phosphothreonine mark is found at Thr-517 and Thr-519. One can recognise a PI3K/PI4K catalytic domain in the interval 535–801; the sequence is EPWQEKVRRI…MVDGSMRSIT (267 aa). The tract at residues 541-547 is G-loop; sequence VRRIREG. Positions 668–676 are catalytic loop; it reads QVKDRHNGN. The interval 687–711 is activation loop; that stretch reads HIDFGFILSSSPRNLGFETSAFKLT.

The protein belongs to the PI3/PI4-kinase family. Type III PI4K subfamily. Interacts with ARF1 and ARF3 in the Golgi complex, but not with ARF4, ARF5 or ARF6. Interacts with NCS1/FREQ in a calcium-independent manner. Interacts with CALN1/CABP8 and CALN2/CABP7; in a calcium-dependent manner; this interaction competes with NCS1/FREQ binding. Interacts with ACBD3. Interacts with ARMH3, YWHAB, YWHAE, YWHAG, YWHAH, YWHAQ, YWHAZ and SFN. Interacts with GGA2 (via VHS domain); the interaction is important for PI4KB location at the Golgi apparatus membrane. Interacts with ATG9A. Mg(2+) serves as cofactor. Mn(2+) is required as a cofactor.

The protein resides in the endomembrane system. Its subcellular location is the mitochondrion outer membrane. It localises to the rough endoplasmic reticulum membrane. It is found in the golgi apparatus. The protein localises to the golgi apparatus membrane. It catalyses the reaction a 1,2-diacyl-sn-glycero-3-phospho-(1D-myo-inositol) + ATP = a 1,2-diacyl-sn-glycero-3-phospho-(1D-myo-inositol 4-phosphate) + ADP + H(+). With respect to regulation, inhibited by wortmannin. Increased kinase activity upon interaction with NCS1/FREQ. Its function is as follows. Phosphorylates phosphatidylinositol (PI) in the first committed step in the production of the second messenger inositol-1,4,5,-trisphosphate (PIP). May regulate Golgi disintegration/reorganization during mitosis, possibly via its phosphorylation. Involved in Golgi-to-plasma membrane trafficking. This chain is Phosphatidylinositol 4-kinase beta (PI4KB), found in Bos taurus (Bovine).